Consider the following 263-residue polypeptide: Ribonuclease HII (263 aa).

Positions 71–262 (QAIAGIDEVG…VKSMCCDSTN (192 aa)) constitute an RNase H type-2 domain. Positions 77, 78, and 172 each coordinate a divalent metal cation.

The protein belongs to the RNase HII family. Mn(2+) is required as a cofactor. Requires Mg(2+) as cofactor.

It localises to the cytoplasm. It carries out the reaction Endonucleolytic cleavage to 5'-phosphomonoester.. Its function is as follows. Endonuclease that specifically degrades the RNA of RNA-DNA hybrids. In Streptococcus pyogenes serotype M4 (strain MGAS10750), this protein is Ribonuclease HII.